The following is a 543-amino-acid chain: MTRFIFVTGGVVSSLGKGIASASLAAVLEARGLKVTILKLDPYINVDPGTMSPFQHGEVFVTDDGAETDLDLGHYERFIRTRMTKRNNFTTGRVYETVLRKERRGDYLGGTVQVIPHITDEIKRRILAGGDGVDIALVEIGGTVGDIESQPFLEAVRQLKVELGNQRALLMHLTLVPYIATAGETKTKPTQHSVKELRSIGLQPDILLCRSEKEIDVDSRRKISLFTNVEERAVVPLPDAKSIYLIPRLLQSYNLDQIVLDKFGLEAAETDLAEWDEVVRREQNPEHAVTIAMVGKYMDLLDAYKSLNEALLHAGLHTLTKVKINYINAEDVETQGVSILEDADAILVPGGFGERGLEGKLMAVRYARENKVPYLGICLGMQTAVIEFARNVLKLDGANSTEFDRKSPFPVIGLITEWINEEGKVETRDESSDLGGTMRLGAQECHLEENSRIREIYGKANIIERHRHRFEVNNRFLDQLRQGGLRIGGWSSDDTLVEVVEVPDHPWFVACQFHPEFTSTPRDGHPLFTSYIQAAVEQNERAK.

The tract at residues 1–265 (MTRFIFVTGG…DQIVLDKFGL (265 aa)) is amidoligase domain. CTP is bound at residue Ser-13. UTP is bound at residue Ser-13. ATP is bound by residues 14-19 (SLGKGI) and Asp-71. Positions 71 and 139 each coordinate Mg(2+). Residues 146–148 (DIE), 186–191 (KTKPTQ), and Lys-222 contribute to the CTP site. UTP is bound by residues 186–191 (KTKPTQ) and Lys-222. The 252-residue stretch at 290–541 (TIAMVGKYMD…IQAAVEQNER (252 aa)) folds into the Glutamine amidotransferase type-1 domain. Gly-351 contacts L-glutamine. Cys-378 acts as the Nucleophile; for glutamine hydrolysis in catalysis. L-glutamine-binding positions include 379–382 (LGMQ), Glu-402, and Arg-469. Active-site residues include His-514 and Glu-516.

Belongs to the CTP synthase family. In terms of assembly, homotetramer.

The enzyme catalyses UTP + L-glutamine + ATP + H2O = CTP + L-glutamate + ADP + phosphate + 2 H(+). It carries out the reaction L-glutamine + H2O = L-glutamate + NH4(+). It catalyses the reaction UTP + NH4(+) + ATP = CTP + ADP + phosphate + 2 H(+). The protein operates within pyrimidine metabolism; CTP biosynthesis via de novo pathway; CTP from UDP: step 2/2. Allosterically activated by GTP, when glutamine is the substrate; GTP has no effect on the reaction when ammonia is the substrate. The allosteric effector GTP functions by stabilizing the protein conformation that binds the tetrahedral intermediate(s) formed during glutamine hydrolysis. Inhibited by the product CTP, via allosteric rather than competitive inhibition. Its function is as follows. Catalyzes the ATP-dependent amination of UTP to CTP with either L-glutamine or ammonia as the source of nitrogen. Regulates intracellular CTP levels through interactions with the four ribonucleotide triphosphates. In Saccharophagus degradans (strain 2-40 / ATCC 43961 / DSM 17024), this protein is CTP synthase.